We begin with the raw amino-acid sequence, 145 residues long: Antiholin-like protein LrgA (145 aa).

4 helical membrane-spanning segments follow: residues 13-30 (FFHQVIVIALVLFVSKII), 40-62 (GSVIGLVLLFVLLCTGAVKLGEV), 69-91 (LTNNIGLLFVPAGISVVNSLGVI), and 95-117 (PFLIIGLIIVSTILLLICTGYVT).

This sequence belongs to the CidA/LrgA family. LrgA subfamily.

The protein resides in the cell membrane. Functionally, inhibits the expression or activity of extracellular murein hydrolases by interacting, possibly with LrgB, with the holin-like proteins CidA and/or CidB. The LrgAB and CidAB proteins may affect the proton motive force of the membrane. May be involved in programmed cell death (PCD), possibly triggering PCD in response to antibiotics and environmental stresses. This chain is Antiholin-like protein LrgA, found in Staphylococcus aureus (strain MW2).